Consider the following 176-residue polypeptide: ADP-ribosylation factor-like protein 8d (176 aa).

GTP is bound by residues 21-26, 40-43, 62-66, and 121-124; these read NSGKTS, MIPT, DLGGQ, and NKID.

The protein belongs to the small GTPase superfamily. Arf family. Interacts with tubulin.

The protein resides in the late endosome membrane. It localises to the lysosome membrane. Its subcellular location is the cytoplasm. It is found in the cytoskeleton. The protein localises to the spindle. May play a role in lysosome motility. May play a role in chromosome segregation. This chain is ADP-ribosylation factor-like protein 8d, found in Arabidopsis thaliana (Mouse-ear cress).